The sequence spans 35 residues: MGKGRIRVEERIKAETDAEMQKATLLDQTQTKKGK.

This is an uncharacterized protein from Bacillus subtilis (strain 168).